Here is a 577-residue protein sequence, read N- to C-terminus: MLGIFFLGVLAPASLGLSALAKLQPTGSQCVEHECFALFQGPATFLDASQACQRLQGHLMTVRSSVAADVISLLLSQSSMDLGPWIGLQLPQGCDDPVHLGPLRGFQWVTGDNHTSYSRWARPNDQTAPLCGPLCVTVSTATEAAPGEPAWEEKPCETETQGFLCEFYFTASCRPLTVNTRDPEAAHISSTYNTPFGVSGADFQTLPVGSSAAVEPLGLELVCRAPPGTSEGHWAWEATGAWNCSVENGGCEYLCNRSTNEPRCLCPRDMDLQADGRSCARPVVQSCNELCEHFCVSNAEVPGSYSCMCETGYQLAADGHRCEDVDDCKQGPNPCPQLCVNTKGGFECFCYDGYELVDGECVELLDPCFGSNCEFQCQPVSPTDYRCICAPGFAPKPDEPHKCEMFCNETSCPADCDPNSPTVCECPEGFILDEGSVCTDIDECSQGECFTSECRNFPGSYECICGPDTALAGQISKDCDPIPVREDTKEEEGSGEPPVSPTPGSPTGPPSARPVHSGVLIGISIASLSLVVALLALLCHLRKKQGAARAELEYKCASSAKEVVLQHVRTDRTLQKF.

Positions 1 to 16 (MLGIFFLGVLAPASLG) are cleaved as a signal peptide. The Extracellular segment spans residues 17–517 (LSALAKLQPT…GPPSARPVHS (501 aa)). The C-type lectin domain maps to 31–167 (VEHECFALFQ…TETQGFLCEF (137 aa)). The N-linked (GlcNAc...) asparagine glycan is linked to Asn113. Cysteines 135 and 156 form a disulfide. EGF-like domains lie at 240 to 280 (GAWN…RSCA) and 283 to 323 (VVQS…HRCE). An N-linked (GlcNAc...) asparagine glycan is attached at Asn243. Disulfide bonds link Cys244/Cys255, Cys251/Cys264, Cys266/Cys279, Cys287/Cys295, Cys291/Cys307, Cys309/Cys322, Cys328/Cys339, Cys335/Cys348, Cys350/Cys361, Cys368/Cys377, Cys373/Cys387, Cys389/Cys403, Cys407/Cys416, Cys412/Cys424, Cys426/Cys438, Cys444/Cys454, Cys449/Cys463, and Cys465/Cys479. The N-linked (GlcNAc...) asparagine glycan is linked to Asn256. Residues 324–362 (DVDDCKQGPNPCPQLCVNTKGGFECFCYDGYELVDGECV) form the EGF-like 3; calcium-binding domain. 2 EGF-like domains span residues 364-404 (LLDP…HKCE) and 403-439 (CEMFCNETSCPADCDPNSPTVCECPEGFILDEGSVCT). The N-linked (GlcNAc...) asparagine glycan is linked to Asn408. One can recognise an EGF-like 6; calcium-binding domain in the interval 440-480 (DIDECSQGECFTSECRNFPGSYECICGPDTALAGQISKDCD). The segment at 476–513 (SKDCDPIPVREDTKEEEGSGEPPVSPTPGSPTGPPSAR) is disordered. The span at 477–492 (KDCDPIPVREDTKEEE) shows a compositional bias: basic and acidic residues. Ser494 carries an O-linked (Xyl...) (chondroitin sulfate) serine glycan. Residues 498-512 (PVSPTPGSPTGPPSA) are compositionally biased toward pro residues. The helical transmembrane segment at 518–541 (GVLIGISIASLSLVVALLALLCHL) threads the bilayer. Over 542-577 (RKKQGAARAELEYKCASSAKEVVLQHVRTDRTLQKF) the chain is Cytoplasmic.

As to quaternary structure, interacts with ITGAL, ITGAM and ITGB2. Interacts with thrombin/F2; this interaction switches the specificity of thrombin from a procoagulant to an anticoagulant and antifibrinolytic protease. Interacts with ANGP1 and ANGP2; these interactions significantly inhibit the generation of activated PC and TAFIa/CPB2 by the thrombin/thrombomodulin complex. Interacts with PF4; this interaction enhances generation of activated protein C. Interacts with HMGB1; this interaction inhibits HMGB1 inflammatory activity. As to expression, endothelial cells are unique in synthesizing thrombomodulin.

The protein localises to the membrane. Functionally, endothelial cell receptor that plays a critical role in regulating several physiological processes including hemostasis, coagulation, fibrinolysis, inflammation, and angiogenesis. Acts as a cofactor for thrombin activation of protein C/PROC on the surface of vascular endothelial cells leading to initiation of the activated protein C anticoagulant pathway. Also accelerates the activation of the plasma carboxypeptidase B2/CPB2, which catalyzes removal of C-terminal basic amino acids from its substrates including kinins or anaphylatoxins leading to fibrinolysis inhibition. Plays critical protective roles in changing the cleavage specificity of protease-activated receptor 1/PAR1, inhibiting endothelial cell permeability and inflammation. Suppresses inflammation distinctly from its anticoagulant cofactor activity by sequestering HMGB1 thereby preventing it from engaging cellular receptors such as RAGE and contributing to the inflammatory response. This chain is Thrombomodulin (Thbd), found in Mus musculus (Mouse).